Here is a 901-residue protein sequence, read N- to C-terminus: Pantothenate kinase 2 (901 aa).

Over residues 1 to 10 (MAGQEDEYDP) the composition is skewed to acidic residues. The interval 1 to 50 (MAGQEDEYDPILDNKREAEAKSQVSVAADKNMAPSTSGTPIHRSGSRPQL) is disordered. Residues 1–466 (MAGQEDEYDP…LGDLDEKISW (466 aa)) are pantothenate kinase. The interval 467–901 (MEKFVRRGTE…CVCRYEPPSL (435 aa)) is 4'-phosphopantetheine phosphatase. Mn(2+) contacts are provided by Asp-731, Asn-732, and Asp-767. Residues 851–855 (EGMGR) carry the Subfamily II EGMGR motif motif.

This sequence in the N-terminal section; belongs to the type II pantothenate kinase family. It in the C-terminal section; belongs to the damage-control phosphatase family. Phosphopantetheine phosphatase II subfamily. Mn(2+) serves as cofactor. The cofactor is Ni(2+). Highly expressed in leaves and developing seeds. Expressed in roots, stems and flowers.

It carries out the reaction (R)-pantothenate + ATP = (R)-4'-phosphopantothenate + ADP + H(+). The enzyme catalyses (R)-4'-phosphopantothenate + H2O = (R)-pantothenate + phosphate. The catalysed reaction is (R)-4'-phosphopantetheine + H2O = (R)-pantetheine + phosphate. It catalyses the reaction (R)-4'-phosphopantetheine sulfonate + H2O = (R)-pantetheine sulfonate + phosphate. The protein operates within cofactor biosynthesis; coenzyme A biosynthesis; CoA from (R)-pantothenate: step 1/5. Activity is strongly promoted by Co(2+), Ni(2+) and Mn(2+). Activity is inhibited by EDTA. Its function is as follows. Catalyzes the phosphorylation of pantothenate the first step in CoA biosynthesis. May play a role in the physiological regulation of the intracellular CoA concentration. Functionally redudant with PANK1. The phosphatase activity shows preference for normal or oxidatively damaged intermediates of 4'-phosphopantetheine, which provides strong indirect evidence that the phosphatase activity pre-empts damage in the CoA pathway. Hydrolyzing excess 4'-phosphopantetheine could constitute a directed overflow mechanism to prevent its oxidation to the S-sulfonate, sulfonate, or other forms. Hydrolyzing 4'-phosphopantetheine sulfonate or S-sulfonate would forestall their conversion to inactive forms of CoA and acyl carrier protein. This is Pantothenate kinase 2 (PANK2) from Arabidopsis thaliana (Mouse-ear cress).